The sequence spans 136 residues: Histone H3.2 (136 aa).

The interval 1–43 (MARTKQTARKSTGGKAPRKQLATKAARKSAPATGGVKKPHRFR) is disordered. An N6,N6,N6-trimethyllysine; alternate mark is found at lysine 5 and lysine 10. 2 positions are modified to N6,N6-dimethyllysine; alternate: lysine 5 and lysine 10. N6-methyllysine; alternate occurs at positions 5 and 10. Position 10 is an N6-acetyllysine; alternate (lysine 10). Serine 11 bears the Phosphoserine mark. Phosphothreonine is present on threonine 12. Lysine 15 carries the N6-acetyllysine modification. 3 positions are modified to N6-methyllysine; alternate: lysine 19, lysine 24, and lysine 28. N6-acetyllysine; alternate occurs at positions 19 and 24. Lysine 28 is modified (N6,N6,N6-trimethyllysine; alternate). The residue at position 28 (lysine 28) is an N6,N6-dimethyllysine; alternate. Serine 29 carries the post-translational modification Phosphoserine. N6,N6,N6-trimethyllysine; alternate is present on lysine 37. N6,N6-dimethyllysine; alternate is present on lysine 37. Lysine 37 bears the N6-methyllysine; alternate mark.

Belongs to the histone H3 family. As to quaternary structure, the nucleosome is a histone octamer containing two molecules each of H2A, H2B, H3 and H4 assembled in one H3-H4 heterotetramer and two H2A-H2B heterodimers. The octamer wraps approximately 147 bp of DNA. Acetylation is generally linked to gene activation. Can be acetylated to form H3K9ac, H3K14ac, H3K18ac and H3K23ac. H3K9ac could compete with H3K9me and prevent gene silencing. H3K9ac is restricted to euchromatin. Post-translationally, methylated to form mainly H3K4me, H3K9me, H3K18me, H3K23me, H3K27me and H3K36me. H3K4me1/2/3, H3K9me3, H3K27me3 and H3K36me1/2/3 are typical marks for euchromatin, whereas heterochromatic chromocenters are enriched in H3K9me1/2 and H3K27me1/2. H2BK143ub1 is probably prerequisite for H3K4me. In terms of processing, can be phosphorylated to form H3S10ph, H3T11ph and H3S28ph.

The protein resides in the nucleus. The protein localises to the chromosome. Core component of nucleosome. Nucleosomes wrap and compact DNA into chromatin, limiting DNA accessibility to the cellular machineries which require DNA as a template. Histones thereby play a central role in transcription regulation, DNA repair, DNA replication and chromosomal stability. DNA accessibility is regulated via a complex set of post-translational modifications of histones, also called histone code, and nucleosome remodeling. This Brassica napus (Rape) protein is Histone H3.2.